The primary structure comprises 141 residues: Hemoglobin subunit alpha (141 aa).

A Globin domain is found at Val-1–Arg-141. Ser-3 bears the Phosphoserine mark. Lys-7 bears the N6-succinyllysine mark. Thr-8 carries the post-translational modification Phosphothreonine. Lys-11 carries the post-translational modification N6-succinyllysine. Lys-16 bears the N6-acetyllysine; alternate mark. Lys-16 is modified (N6-succinyllysine; alternate). Tyr-24 is subject to Phosphotyrosine. Phosphoserine is present on Ser-35. N6-succinyllysine is present on Lys-40. Ser-49 bears the Phosphoserine mark. Gln-58 serves as a coordination point for O2. His-87 provides a ligand contact to heme b. At Thr-108 the chain carries Phosphothreonine. Phosphoserine occurs at positions 124 and 131. A phosphothreonine mark is found at Thr-134 and Thr-137. Ser-138 is subject to Phosphoserine.

This sequence belongs to the globin family. As to quaternary structure, heterotetramer of two alpha chains and two beta chains. As to expression, red blood cells.

Involved in oxygen transport from the lung to the various peripheral tissues. Its function is as follows. Hemopressin acts as an antagonist peptide of the cannabinoid receptor CNR1. Hemopressin-binding efficiently blocks cannabinoid receptor CNR1 and subsequent signaling. The polypeptide is Hemoglobin subunit alpha (HBA) (Didelphis virginiana (North American opossum)).